The primary structure comprises 894 residues: Translation initiation factor IF-2 (894 aa).

The segment at 25 to 304 is disordered; it reads ADAGMNKASS…KPTSMQHGFD (280 aa). Composition is skewed to basic and acidic residues over residues 33–44, 52–62, 101–174, 184–239, and 247–263; these read SSDHVSDEEKQK, EHGDKSGESEP, STIE…KEMN, AKKE…ENSD, and YARE…EGGA. Residues 283–293 are compositionally biased toward basic residues; the sequence is RGGKGRNKGKL. A tr-type G domain is found at 393 to 562; it reads PRAPVVTIMG…LLQSEVLELT (170 aa). The segment at 402 to 409 is G1; it reads GHVDHGKT. GTP is bound at residue 402-409; the sequence is GHVDHGKT. Residues 427–431 form a G2 region; it reads GITQH. The segment at 448-451 is G3; that stretch reads DTPG. Residues 448–452 and 502–505 each bind GTP; these read DTPGH and NKID. Residues 502–505 form a G4 region; it reads NKID. The G5 stretch occupies residues 538-540; that stretch reads SAK.

The protein belongs to the TRAFAC class translation factor GTPase superfamily. Classic translation factor GTPase family. IF-2 subfamily.

The protein resides in the cytoplasm. Its function is as follows. One of the essential components for the initiation of protein synthesis. Protects formylmethionyl-tRNA from spontaneous hydrolysis and promotes its binding to the 30S ribosomal subunits. Also involved in the hydrolysis of GTP during the formation of the 70S ribosomal complex. This chain is Translation initiation factor IF-2, found in Vibrio campbellii (strain ATCC BAA-1116).